Here is a 153-residue protein sequence, read N- to C-terminus: Ribonuclease H (153 aa).

In terms of domain architecture, RNase H type-1 spans 1–141 (MKHVHIFTDG…ADELARKGME (141 aa)). Residues Asp9, Glu47, Asp69, and Asp133 each contribute to the Mg(2+) site. A disordered region spans residues 123–153 (HAGHPENERADELARKGMEPFKKARRADAVK). Residues 125–153 (GHPENERADELARKGMEPFKKARRADAVK) show a composition bias toward basic and acidic residues.

Belongs to the RNase H family. As to quaternary structure, monomer. It depends on Mg(2+) as a cofactor.

It is found in the cytoplasm. It carries out the reaction Endonucleolytic cleavage to 5'-phosphomonoester.. Its function is as follows. Endonuclease that specifically degrades the RNA of RNA-DNA hybrids. The protein is Ribonuclease H of Rhizobium meliloti (strain 1021) (Ensifer meliloti).